The primary structure comprises 680 residues: MNLCSSGATASTTSLSSTGQAERSGGVPGGGAEGGGGGGGSGNSGGGGKTSDVSAEASTLCFAGGSGTAGAITGTEELSNANSPANGAGGASGSTGSGQQPTGSNGHSHLHNENNANMPPETRPKMVTVKHPESNKPKPTTKKSKPIQADQDVIKALQRCRIKRLDLSKSSITVIPSTVKECVHLTELYLYSNKIGQLPPEIGCLVSLRNLALNENSLTSLPESLQNCSQLKVLDLRHNKLAEIPPVIYRLRSLTTLYLRFNRITAVADDLRQLVNLTMLSLRENKIRELGSAIGALVNLTTLDVSHNHLEHLPEDIGNCVNLSALDLQHNELLDIPDSIGNLKSLVRLGMRYNRLSSVPATLKNCKSMDEFNVEGNGITQLPDGMLASLSGLTTITLSRNQFASYPTGGPAQFTNVYSINLEHNRIDKIPYGIFSRAKGLTKLNMKENMLTALPLDIGTWVNMVELNLATNALQKLPDDIMNLQNLEILILSNNMLKKIPNTIGNLRRLRILDLEENRIEVLPHEIGLLHELQRLILQTNQITMLPRSIGHLGNLTHLSVSENNLQFLPEEIGSLESLENLYINQNPGLEKLPFELALCQNLKYLNIDKCPLSTIPPEIQAGGPSLVLQWLKMHSPYRQIDCYYQYELQTVNQAPGAGGNGGGGAAAAGGSASRSSDRR.

Residues M1 to G19 are compositionally biased toward low complexity. Disordered regions lie at residues M1–S54 and T73–A149. Positions G26–K49 are enriched in gly residues. A compositionally biased stretch (low complexity) spans T73–N86. The span at G87–G96 shows a compositional bias: gly residues. Positions S97 to G106 are enriched in low complexity. LRR repeat units lie at residues R161–C182, H184–L205, S207–C228, Q230–L251, S253–L274, N276–L297, N299–C320, N322–L343, S345–K367, S368–S389, G392–Q413, N416–R437, G440–W461, N463–L484, N486–L507, R509–L530, E532–L553, N555–L576, S578–C600, and N602–G623. The span at A658–A668 shows a compositional bias: gly residues. A disordered region spans residues A658–R680. A compositionally biased stretch (low complexity) spans A669–R680.

It belongs to the SHOC2 family.

Acts as a Ras effector and participates in MAPK pathway activation. Probably acts as a regulatory subunit of protein phosphatase that specifically dephosphorylates Raf kinase and stimulate Raf activity at specialized signaling complexes upon Ras activation. The chain is Leucine-rich repeat protein soc-2 homolog (Sur-8) from Drosophila simulans (Fruit fly).